A 146-amino-acid polypeptide reads, in one-letter code: Late protein H7 (146 aa).

A helical membrane pass occupies residues 10–32; that stretch reads LAMTAFFGELNTLDIMALIMSIF.

Belongs to the chordopoxvirinae H7 family.

The protein resides in the membrane. Functionally, contributes to the formation of crescents and immature virions (IV). In Vaccinia virus (strain Tian Tan) (VACV), this protein is Late protein H7.